Consider the following 160-residue polypeptide: uncharacterized protein (160 aa).

The protein belongs to the Dps family.

This is an uncharacterized protein from Haemophilus influenzae (strain ATCC 51907 / DSM 11121 / KW20 / Rd).